The chain runs to 96 residues: Glutamyl-tRNA(Gln) amidotransferase subunit C (96 aa).

This sequence belongs to the GatC family. In terms of assembly, heterotrimer of A, B and C subunits.

The catalysed reaction is L-glutamyl-tRNA(Gln) + L-glutamine + ATP + H2O = L-glutaminyl-tRNA(Gln) + L-glutamate + ADP + phosphate + H(+). It carries out the reaction L-aspartyl-tRNA(Asn) + L-glutamine + ATP + H2O = L-asparaginyl-tRNA(Asn) + L-glutamate + ADP + phosphate + 2 H(+). In terms of biological role, allows the formation of correctly charged Asn-tRNA(Asn) or Gln-tRNA(Gln) through the transamidation of misacylated Asp-tRNA(Asn) or Glu-tRNA(Gln) in organisms which lack either or both of asparaginyl-tRNA or glutaminyl-tRNA synthetases. The reaction takes place in the presence of glutamine and ATP through an activated phospho-Asp-tRNA(Asn) or phospho-Glu-tRNA(Gln). In Pseudomonas aeruginosa (strain ATCC 15692 / DSM 22644 / CIP 104116 / JCM 14847 / LMG 12228 / 1C / PRS 101 / PAO1), this protein is Glutamyl-tRNA(Gln) amidotransferase subunit C.